Here is a 256-residue protein sequence, read N- to C-terminus: 5-keto-4-deoxy-D-glucarate aldolase (256 aa).

His-50 acts as the Proton acceptor in catalysis. Gln-151 contributes to the substrate binding site. A Mg(2+)-binding site is contributed by Glu-153. Residues Ser-178 and Asp-179 each contribute to the substrate site. Mg(2+) is bound at residue Asp-179.

This sequence belongs to the HpcH/HpaI aldolase family. KDGluc aldolase subfamily. Homohexamer; trimer of dimers. Requires Mg(2+) as cofactor.

The catalysed reaction is 5-dehydro-4-deoxy-D-glucarate = 2-hydroxy-3-oxopropanoate + pyruvate. It catalyses the reaction 2-dehydro-3-deoxy-D-glucarate = 2-hydroxy-3-oxopropanoate + pyruvate. It functions in the pathway carbohydrate acid metabolism; galactarate degradation; D-glycerate from galactarate: step 2/3. Its function is as follows. Catalyzes the reversible retro-aldol cleavage of both 5-keto-4-deoxy-D-glucarate and 2-keto-3-deoxy-D-glucarate to pyruvate and tartronic semialdehyde. This chain is 5-keto-4-deoxy-D-glucarate aldolase, found in Salmonella agona (strain SL483).